The chain runs to 426 residues: D-tagatose-1,6-bisphosphate aldolase subunit KbaZ (426 aa).

It belongs to the GatZ/KbaZ family. KbaZ subfamily. As to quaternary structure, forms a complex with KbaY.

Its pathway is carbohydrate metabolism; D-tagatose 6-phosphate degradation; D-glyceraldehyde 3-phosphate and glycerone phosphate from D-tagatose 6-phosphate: step 2/2. In terms of biological role, component of the tagatose-1,6-bisphosphate aldolase KbaYZ that is required for full activity and stability of the Y subunit. Could have a chaperone-like function for the proper and stable folding of KbaY. When expressed alone, KbaZ does not show any aldolase activity. This chain is D-tagatose-1,6-bisphosphate aldolase subunit KbaZ, found in Escherichia coli O127:H6 (strain E2348/69 / EPEC).